The primary structure comprises 103 residues: Putative glutaredoxin-C14 (103 aa).

Residues 1 to 102 enclose the Glutaredoxin domain; sequence MDRVMKLASE…PMLKNAGALW (102 aa). Cys-21 and Cys-24 form a disulfide bridge. Residues 100-103 carry the Responsive for interaction with TGA factors motif; the sequence is ALWL.

Belongs to the glutaredoxin family. CC-type subfamily.

Its subcellular location is the cytoplasm. It is found in the nucleus. In terms of biological role, has a glutathione-disulfide oxidoreductase activity in the presence of NADPH and glutathione reductase. Reduces low molecular weight disulfides and proteins. This is Putative glutaredoxin-C14 (GRXC14) from Oryza sativa subsp. japonica (Rice).